A 172-amino-acid polypeptide reads, in one-letter code: MLDAFAKVVAQADARGEFLSSQQIDALSDIIAEGNKRLDTVNKINSNASAIVTNSARALFAEQPQLAQPGGNAYPSRRMAACLRDMEIVLRYVSYAIAAGDSSVLDDRCLNGLRETYQALGTPGSSVAVAIQKMKEASISLANDVNGVPLGDCSSLVAELSVYFDRAAASVV.

Position 72 is an N4-methylasparagine (Asn-72). The (2R,3E)-phycocyanobilin site is built by Cys-82 and Cys-153.

This sequence belongs to the phycobiliprotein family. In terms of assembly, heterodimer of an alpha and a beta subunit, which further assembles into trimers and the trimers into hexamers. The basic functional unit of phycobiliproteins is a ring-shaped hexamer formed from two back-to-back trimers contacting via the alpha chain subunits. The trimers are composed of alpha/beta subunit heterodimers arranged around a three-fold axis of symmetry. The phycoerythrins also contain a gamma subunit which is located in the center of the hexamer. Contains two covalently linked bilin chromophores.

The protein resides in the plastid. It is found in the chloroplast thylakoid membrane. Light-harvesting photosynthetic bile pigment-protein from the phycobiliprotein complex (phycobilisome, PBS). Phycocyanin is the major phycobiliprotein in the PBS rod. The polypeptide is C-phycocyanin beta chain (cpcB) (Aglaothamnion neglectum (Red alga)).